The chain runs to 468 residues: Acetyl-CoA decarbonylase/synthase complex subunit gamma 2 (468 aa).

The region spanning 1–60 (MKINSPLEAYKYLPQTNCGECGEATCMAFASKLIDRSGKPTQCPPLVKEKKFAKKLAELE) is the 4Fe-4S domain. The [4Fe-4S] cluster site is built by C18, C21, C26, and C43.

In terms of assembly, heterodimer of delta and gamma chains. The ACDS complex is made up of alpha, epsilon, beta, gamma and delta chains with a probable stoichiometry of (alpha(2)epsilon(2))(4)-beta(8)-(gamma(1)delta(1))(8). It depends on corrinoid as a cofactor. Requires [4Fe-4S] cluster as cofactor.

It catalyses the reaction 5,6,7,8-tetrahydrosarcinapterin + methyl-Co(III)-[corrinoid Fe-S protein] = 5-methyltetrahydrosarcinapterin + Co(I)-[corrinoid Fe-S protein] + H(+). The protein operates within one-carbon metabolism; methanogenesis from acetate. In terms of biological role, part of a complex that catalyzes the reversible cleavage of acetyl-CoA, allowing growth on acetate as sole source of carbon and energy. This is Acetyl-CoA decarbonylase/synthase complex subunit gamma 2 from Methanosarcina thermophila.